We begin with the raw amino-acid sequence, 194 residues long: MRVKRRKTVSCCTREISQLHGQSLKQINIGVGSLILTKHQGYEFYCKKVTFVFFCFFKISLNSAYLYTLYSDVRTEVAKMERVAWLEVVGKFETEKLTPNSLYEVVFVVKLIDSAKGWDFRVNFKLVLPTGETKERRENVNLLERNKWVEIPAGEFMISPEHLSGKIEFSMLEVKSDQWKSGLIVKGVAIRPKN.

A helical membrane pass occupies residues 49–71 (VTFVFFCFFKISLNSAYLYTLYS).

Vascular tissues, specifically in phloem companion cell-sieve element complexes.

It is found in the membrane. The polypeptide is Protein PHLOEM PROTEIN 2-LIKE A2 (PP2A2) (Arabidopsis thaliana (Mouse-ear cress)).